Consider the following 485-residue polypeptide: MSGMGEKSEQISKSARSTDPQEQESVALASQCVGEGRVLKIRGGVVDVFFTEHIPRIHDLVYAGDLAMEVAALLDQGTVRCIALTPVRGLGLGMPVHATGAPIQVPVGEAVLGRMLNVFGEPIDGKPAPNATISRSIHQAPPVLEERVVHSTILETGIKAIDLLSPIERGGKTGLFGGAGVGKTVLITELINNTAQHHKGVSLFCGIGERSREAEELYREMGEAGVRDKTVMLFGQMSEAPGVRFLVGKTALTMAEYFRDDLGQDVLLLIDNVFRFVQAGSEVSGLLGRMPSRVGYQPTLATELASLQERITSTRKGAITSIQAVYVPADDFTDPAAAHIFSHLSASVVLSRKRASEGLYPAVDPLASTSVMLTPAVVGQRHYDIARAVRRTLAEYEELRDIIAMLGLEELSAADRTVVARARRLERFLTQPFFSAESFSGEIGARVSVAETLAGCERILQQTKFADDEIDYYMIGALPEQKTAV.

Residues 1-10 (MSGMGEKSEQ) are compositionally biased toward basic and acidic residues. The tract at residues 1 to 27 (MSGMGEKSEQISKSARSTDPQEQESVA) is disordered. Residues 11–24 (ISKSARSTDPQEQE) are compositionally biased toward polar residues. 177-184 (GGAGVGKT) is a binding site for ATP.

The protein belongs to the ATPase alpha/beta chains family. In terms of assembly, F-type ATPases have 2 components, CF(1) - the catalytic core - and CF(0) - the membrane proton channel. CF(1) has five subunits: alpha(3), beta(3), gamma(1), delta(1), epsilon(1). CF(0) has three main subunits: a(1), b(2) and c(9-12). The alpha and beta chains form an alternating ring which encloses part of the gamma chain. CF(1) is attached to CF(0) by a central stalk formed by the gamma and epsilon chains, while a peripheral stalk is formed by the delta and b chains.

The protein resides in the cell inner membrane. The catalysed reaction is ATP + H2O + 4 H(+)(in) = ADP + phosphate + 5 H(+)(out). Functionally, produces ATP from ADP in the presence of a proton gradient across the membrane. The catalytic sites are hosted primarily by the beta subunits. The chain is ATP synthase subunit beta 2 from Nitrosomonas eutropha (strain DSM 101675 / C91 / Nm57).